A 135-amino-acid chain; its full sequence is Helix-loop-helix protein 2 (135 aa).

Residues 1–80 (MMLSPDQAAD…RRRATAKYRS (80 aa)) are disordered. Over residues 10 to 21 (DSDHPSSAHSDP) the composition is skewed to basic and acidic residues. The segment covering 68-80 (KRRRRRATAKYRS) has biased composition (basic residues). In terms of domain architecture, bHLH spans 77–129 (KYRSAHATRERIRVEAFNLAFAELRKLLPTLPPDKKLSKIEILRLAICYISYL).

Homodimer. Interacts and may form heterodimers with STAT3.

The protein resides in the nucleus. Functionally, transcription factor which binds the E box motif 5'-CA[TC][AG]TG-3'. Involved in regulating energy expenditure, body mass, voluntary physical activity, mating behavior and reproductive longevity, acting through the hypothalamic-pituitary-gonadal axis. Acts as a transcriptional activator of target genes, including NDN, PCSK1, MC4R. Is also a transcriptional activator of KISS1. May act centrally to regulate function of both white and brown adipose tissue. Together with NHLH1, required to maintain migration and survival of cells in the anterior extramural migration stream (aes), which forms the precerebellar nuclei. Also, in concert with NHLH1, may determine fate of gonadotropin releasing hormone-1 (GnRH-1) neurons. This chain is Helix-loop-helix protein 2 (NHLH2), found in Homo sapiens (Human).